Consider the following 681-residue polypeptide: DNA-directed RNA polymerase subunit beta' (681 aa).

Cysteine 69, cysteine 71, cysteine 87, and cysteine 90 together coordinate Zn(2+). Mg(2+) contacts are provided by aspartate 490, aspartate 492, and aspartate 494.

Belongs to the RNA polymerase beta' chain family. RpoC1 subfamily. As to quaternary structure, in plastids the minimal PEP RNA polymerase catalytic core is composed of four subunits: alpha, beta, beta', and beta''. When a (nuclear-encoded) sigma factor is associated with the core the holoenzyme is formed, which can initiate transcription. It depends on Mg(2+) as a cofactor. The cofactor is Zn(2+).

Its subcellular location is the plastid. It is found in the chloroplast. It carries out the reaction RNA(n) + a ribonucleoside 5'-triphosphate = RNA(n+1) + diphosphate. DNA-dependent RNA polymerase catalyzes the transcription of DNA into RNA using the four ribonucleoside triphosphates as substrates. The sequence is that of DNA-directed RNA polymerase subunit beta' from Liriodendron tulipifera (Tuliptree).